The sequence spans 146 residues: Hemoglobin subunit beta (146 aa).

An N-acetylvaline modification is found at Val-1. The Globin domain maps to His-2 to His-146. Position 12 is a phosphothreonine (Thr-12). Ser-44 carries the phosphoserine modification. The residue at position 59 (Lys-59) is an N6-acetyllysine. His-63 lines the heme b pocket. Residue Lys-82 is modified to N6-acetyllysine. Residue His-92 participates in heme b binding. Cys-93 is modified (S-nitrosocysteine). Residue Lys-144 is modified to N6-acetyllysine.

Belongs to the globin family. Heterotetramer of two alpha chains and two beta chains. Red blood cells.

Its function is as follows. Involved in oxygen transport from the lung to the various peripheral tissues. This is Hemoglobin subunit beta (HBB) from Nasua nasua (Ring-tailed coati).